We begin with the raw amino-acid sequence, 111 residues long: Translation initiation factor 1A (111 aa).

The region spanning glycine 12 to leucine 86 is the S1-like domain.

This sequence belongs to the eIF-1A family.

Its function is as follows. Seems to be required for maximal rate of protein biosynthesis. Enhances ribosome dissociation into subunits and stabilizes the binding of the initiator Met-tRNA(I) to 40 S ribosomal subunits. The chain is Translation initiation factor 1A (eIF1A) from Aeropyrum pernix (strain ATCC 700893 / DSM 11879 / JCM 9820 / NBRC 100138 / K1).